Consider the following 233-residue polypeptide: Uridylate kinase (233 aa).

9 to 10 (GS) is an ATP binding site. Gly-43 contributes to the UMP binding site. Residues Gly-44 and Arg-48 each coordinate ATP. Residues Asp-65 and 113 to 119 (VTPGQTT) contribute to the UMP site. ATP contacts are provided by Thr-139, Tyr-145, and Asp-148.

It belongs to the UMP kinase family. In terms of assembly, homohexamer.

The protein resides in the cytoplasm. The enzyme catalyses UMP + ATP = UDP + ADP. It functions in the pathway pyrimidine metabolism; CTP biosynthesis via de novo pathway; UDP from UMP (UMPK route): step 1/1. Its activity is regulated as follows. Inhibited by UTP. Catalyzes the reversible phosphorylation of UMP to UDP. This is Uridylate kinase from Methanosarcina mazei (strain ATCC BAA-159 / DSM 3647 / Goe1 / Go1 / JCM 11833 / OCM 88) (Methanosarcina frisia).